Consider the following 1163-residue polypeptide: DNA-directed RNA polymerase subunit beta' (1163 aa).

Residues C59, C61, C74, and C77 each coordinate Zn(2+). The Mg(2+) site is built by D449, D451, and D453. Residues C794, C868, C875, and C878 each coordinate Zn(2+).

This sequence belongs to the RNA polymerase beta' chain family. As to quaternary structure, the RNAP catalytic core consists of 2 alpha, 1 beta, 1 beta' and 1 omega subunit. When a sigma factor is associated with the core the holoenzyme is formed, which can initiate transcription. Mg(2+) serves as cofactor. The cofactor is Zn(2+).

It catalyses the reaction RNA(n) + a ribonucleoside 5'-triphosphate = RNA(n+1) + diphosphate. DNA-dependent RNA polymerase catalyzes the transcription of DNA into RNA using the four ribonucleoside triphosphates as substrates. This is DNA-directed RNA polymerase subunit beta' from Caldicellulosiruptor saccharolyticus (strain ATCC 43494 / DSM 8903 / Tp8T 6331).